Consider the following 466-residue polypeptide: tRNA-2-methylthio-N(6)-dimethylallyladenosine synthase (466 aa).

Positions 3–123 constitute an MTTase N-terminal domain; sequence KKLYIKTYGC…LPEMVARAVR (121 aa). [4Fe-4S] cluster-binding residues include Cys12, Cys48, Cys86, Cys162, Cys166, and Cys169. In terms of domain architecture, Radical SAM core spans 148 to 381; it reads SPAGPSAFLS…QQLLTAQQTA (234 aa). Residues 384 to 446 enclose the TRAM domain; it reads TACVGRVQPV…ANSLSGTVVV (63 aa).

It belongs to the methylthiotransferase family. MiaB subfamily. In terms of assembly, monomer. [4Fe-4S] cluster is required as a cofactor.

Its subcellular location is the cytoplasm. It catalyses the reaction N(6)-dimethylallyladenosine(37) in tRNA + (sulfur carrier)-SH + AH2 + 2 S-adenosyl-L-methionine = 2-methylsulfanyl-N(6)-dimethylallyladenosine(37) in tRNA + (sulfur carrier)-H + 5'-deoxyadenosine + L-methionine + A + S-adenosyl-L-homocysteine + 2 H(+). In terms of biological role, catalyzes the methylthiolation of N6-(dimethylallyl)adenosine (i(6)A), leading to the formation of 2-methylthio-N6-(dimethylallyl)adenosine (ms(2)i(6)A) at position 37 in tRNAs that read codons beginning with uridine. The polypeptide is tRNA-2-methylthio-N(6)-dimethylallyladenosine synthase (Rhodospirillum centenum (strain ATCC 51521 / SW)).